The primary structure comprises 668 residues: DNA damage-responsive serine/threonine-protein kinase RqkA (668 aa).

The Protein kinase domain occupies 13 to 272; that stretch reads YELLALLGEG…SGAALAHLWA (260 aa). ATP contacts are provided by residues 19–27 and K42; that span reads LGEGGSAQV. The active-site Proton acceptor is the D137.

This sequence belongs to the protein kinase superfamily. Ser/Thr protein kinase family. It depends on pyrroloquinoline quinone as a cofactor. Autophosphorylated.

It catalyses the reaction L-seryl-[protein] + ATP = O-phospho-L-seryl-[protein] + ADP + H(+). It carries out the reaction L-threonyl-[protein] + ATP = O-phospho-L-threonyl-[protein] + ADP + H(+). Its activity is regulated as follows. Autokinase activity is stimulated by DNA damage. Stimulated by PQQ and DNA ends in vitro. Its function is as follows. Plays an important role in radiation resistance and DNA double-strand break (DSB) repair. Involved in transcriptional regulation of genes important for bacterial stress response. Phosphorylates PprA in vitro. In Deinococcus radiodurans (strain ATCC 13939 / DSM 20539 / JCM 16871 / CCUG 27074 / LMG 4051 / NBRC 15346 / NCIMB 9279 / VKM B-1422 / R1), this protein is DNA damage-responsive serine/threonine-protein kinase RqkA (rqkA).